Here is a 514-residue protein sequence, read N- to C-terminus: 2,3-bisphosphoglycerate-independent phosphoglycerate mutase (514 aa).

Mn(2+) is bound by residues aspartate 14 and serine 64. The active-site Phosphoserine intermediate is the serine 64. Substrate is bound by residues histidine 125, 155 to 156, arginine 187, arginine 193, 263 to 266, and lysine 337; these read RD and RADR. The Mn(2+) site is built by aspartate 404, histidine 408, aspartate 445, histidine 446, and histidine 463.

This sequence belongs to the BPG-independent phosphoglycerate mutase family. As to quaternary structure, monomer. Requires Mn(2+) as cofactor.

It catalyses the reaction (2R)-2-phosphoglycerate = (2R)-3-phosphoglycerate. It functions in the pathway carbohydrate degradation; glycolysis; pyruvate from D-glyceraldehyde 3-phosphate: step 3/5. Functionally, catalyzes the interconversion of 2-phosphoglycerate and 3-phosphoglycerate. This Hahella chejuensis (strain KCTC 2396) protein is 2,3-bisphosphoglycerate-independent phosphoglycerate mutase.